The primary structure comprises 74 residues: UPF0435 protein BcerKBAB4_0386 (74 aa).

It belongs to the UPF0435 family.

The polypeptide is UPF0435 protein BcerKBAB4_0386 (Bacillus mycoides (strain KBAB4) (Bacillus weihenstephanensis)).